The chain runs to 364 residues: tRNA 2-selenouridine synthase (364 aa).

The Rhodanese domain maps to 14-137; sequence LIADTPIIDV…LRQTTIQATI (124 aa). The active-site S-selanylcysteine intermediate is cysteine 97.

It belongs to the SelU family. As to quaternary structure, monomer.

The enzyme catalyses 5-methylaminomethyl-2-thiouridine(34) in tRNA + selenophosphate + (2E)-geranyl diphosphate + H2O + H(+) = 5-methylaminomethyl-2-selenouridine(34) in tRNA + (2E)-thiogeraniol + phosphate + diphosphate. It catalyses the reaction 5-methylaminomethyl-2-thiouridine(34) in tRNA + (2E)-geranyl diphosphate = 5-methylaminomethyl-S-(2E)-geranyl-thiouridine(34) in tRNA + diphosphate. It carries out the reaction 5-methylaminomethyl-S-(2E)-geranyl-thiouridine(34) in tRNA + selenophosphate + H(+) = 5-methylaminomethyl-2-(Se-phospho)selenouridine(34) in tRNA + (2E)-thiogeraniol. The catalysed reaction is 5-methylaminomethyl-2-(Se-phospho)selenouridine(34) in tRNA + H2O = 5-methylaminomethyl-2-selenouridine(34) in tRNA + phosphate. In terms of biological role, involved in the post-transcriptional modification of the uridine at the wobble position (U34) of tRNA(Lys), tRNA(Glu) and tRNA(Gln). Catalyzes the conversion of 2-thiouridine (S2U-RNA) to 2-selenouridine (Se2U-RNA). Acts in a two-step process involving geranylation of 2-thiouridine (S2U) to S-geranyl-2-thiouridine (geS2U) and subsequent selenation of the latter derivative to 2-selenouridine (Se2U) in the tRNA chain. The chain is tRNA 2-selenouridine synthase from Escherichia coli (strain 55989 / EAEC).